The sequence spans 480 residues: Adenosylhomocysteinase (480 aa).

Positions 63, 142, and 203 each coordinate substrate. 204-206 (TTT) provides a ligand contact to NAD(+). Substrate-binding residues include Lys233 and Asp237. Residues Asn238, 267–272 (GYGDVG), Glu290, Asn325, 346–348 (IGH), and Asn394 contribute to the NAD(+) site.

Belongs to the adenosylhomocysteinase family. NAD(+) is required as a cofactor.

It is found in the cytoplasm. It carries out the reaction S-adenosyl-L-homocysteine + H2O = L-homocysteine + adenosine. The protein operates within amino-acid biosynthesis; L-homocysteine biosynthesis; L-homocysteine from S-adenosyl-L-homocysteine: step 1/1. Its function is as follows. May play a key role in the regulation of the intracellular concentration of adenosylhomocysteine. The protein is Adenosylhomocysteinase of Xylella fastidiosa (strain M12).